The primary structure comprises 516 residues: uncharacterized protein (516 aa).

Positions 31–185 (ACIFLSKFDM…LDKFDIFEKF (155 aa)) constitute a uDENN domain. In terms of domain architecture, cDENN spans 211 to 365 (HLVEYLPYWT…LEVYEKLILG (155 aa)). The dDENN domain maps to 367 to 513 (LQEDASTNAT…DISNLPECLG (147 aa)). Residues C511 and C516 are each lipidated (S-palmitoyl cysteine).

Palmitoylated by AKR1.

The protein localises to the lipid droplet. Functionally, may be involved in lipid metabolism. This is an uncharacterized protein from Saccharomyces cerevisiae (strain ATCC 204508 / S288c) (Baker's yeast).